The sequence spans 273 residues: Dermonecrotic toxin LhSicTox-alphaIA1iv (273 aa).

His-5 is an active-site residue. Mg(2+) is bound by residues Glu-25 and Asp-27. The active-site Nucleophile is His-41. 2 disulfides stabilise this stretch: Cys-45–Cys-51 and Cys-47–Cys-190. Asp-85 contributes to the Mg(2+) binding site.

Belongs to the arthropod phospholipase D family. Class II subfamily. It depends on Mg(2+) as a cofactor. As to expression, expressed by the venom gland.

It localises to the secreted. It carries out the reaction an N-(acyl)-sphingosylphosphocholine = an N-(acyl)-sphingosyl-1,3-cyclic phosphate + choline. The enzyme catalyses an N-(acyl)-sphingosylphosphoethanolamine = an N-(acyl)-sphingosyl-1,3-cyclic phosphate + ethanolamine. It catalyses the reaction a 1-acyl-sn-glycero-3-phosphocholine = a 1-acyl-sn-glycero-2,3-cyclic phosphate + choline. The catalysed reaction is a 1-acyl-sn-glycero-3-phosphoethanolamine = a 1-acyl-sn-glycero-2,3-cyclic phosphate + ethanolamine. Dermonecrotic toxins cleave the phosphodiester linkage between the phosphate and headgroup of certain phospholipids (sphingolipid and lysolipid substrates), forming an alcohol (often choline) and a cyclic phosphate. This toxin acts on sphingomyelin (SM). It may also act on ceramide phosphoethanolamine (CPE), lysophosphatidylcholine (LPC) and lysophosphatidylethanolamine (LPE), but not on lysophosphatidylserine (LPS), and lysophosphatidylglycerol (LPG). It acts by transphosphatidylation, releasing exclusively cyclic phosphate products as second products. Induces dermonecrosis, hemolysis, increased vascular permeability, edema, inflammatory response, and platelet aggregation. This chain is Dermonecrotic toxin LhSicTox-alphaIA1iv, found in Loxosceles hirsuta (Recluse spider).